Here is a 105-residue protein sequence, read N- to C-terminus: Intracellular chorismate mutase (105 aa).

In terms of domain architecture, Chorismate mutase spans 23 to 105; sequence SQPVPEIDTL…LRLGRGRLGH (83 aa). Chorismate contacts are provided by R61, V70, and E74.

As to quaternary structure, homodimer. Interacts with AroG.

Its subcellular location is the cytoplasm. The enzyme catalyses chorismate = prephenate. It participates in metabolic intermediate biosynthesis; prephenate biosynthesis; prephenate from chorismate: step 1/1. The formation of the complex with AroG activates the chorismate mutase activity. Functionally, catalyzes the Claisen rearrangement of chorismate to prephenate. Probably involved in the aromatic amino acid biosynthesis. In Mycobacterium bovis (strain ATCC BAA-935 / AF2122/97), this protein is Intracellular chorismate mutase.